Here is a 92-residue protein sequence, read N- to C-terminus: UPF0473 protein BCE33L4129 (92 aa).

The protein belongs to the UPF0473 family.

In Bacillus cereus (strain ZK / E33L), this protein is UPF0473 protein BCE33L4129.